Here is an 86-residue protein sequence, read N- to C-terminus: Omega-theraphotoxin-Hhn1f 1 (86 aa).

The N-terminal stretch at 1–21 (MKSIVFVALFGLALLAVVCSA) is a signal peptide. Residues 22–50 (SEDAHKELLKEVVRAMVVDKTDAVQAEER) constitute a propeptide that is removed on maturation. 3 cysteine pairs are disulfide-bonded: cysteine 52–cysteine 66, cysteine 59–cysteine 71, and cysteine 65–cysteine 78.

The protein belongs to the neurotoxin 10 (Hwtx-1) family. 17 (Hntx-9) subfamily. As to expression, expressed by the venom gland.

It localises to the secreted. In terms of biological role, ion channel inhibitor. The polypeptide is Omega-theraphotoxin-Hhn1f 1 (Cyriopagopus hainanus (Chinese bird spider)).